The sequence spans 496 residues: Galactose-1-phosphate uridylyltransferase (496 aa).

Belongs to the galactose-1-phosphate uridylyltransferase type 2 family.

Its subcellular location is the cytoplasm. The enzyme catalyses alpha-D-galactose 1-phosphate + UDP-alpha-D-glucose = alpha-D-glucose 1-phosphate + UDP-alpha-D-galactose. Its pathway is carbohydrate metabolism; galactose metabolism. The polypeptide is Galactose-1-phosphate uridylyltransferase (Staphylococcus saprophyticus subsp. saprophyticus (strain ATCC 15305 / DSM 20229 / NCIMB 8711 / NCTC 7292 / S-41)).